The sequence spans 430 residues: Sesquiterpene synthase 15 (430 aa).

Mg(2+) contacts are provided by D182, D186, and E335. Positions 182 to 186 match the DDXXD motif motif; it reads DDIYD.

Belongs to the terpene synthase family. Tpsa subfamily. The cofactor is Mg(2+). It depends on Mn(2+) as a cofactor.

It participates in secondary metabolite biosynthesis; terpenoid biosynthesis. Sesquiterpene synthase involved in the biosynthesis of volatile compounds. No activity detected with geranyl diphosphate (GPP) and farnesyl diphosphate (FPP) as substrates. In Solanum lycopersicum (Tomato), this protein is Sesquiterpene synthase 15.